A 164-amino-acid polypeptide reads, in one-letter code: 5-formyltetrahydrofolate cyclo-ligase (164 aa).

3–7 (KNALR) contributes to the ATP binding site. Residues Glu-50 and Glu-55 each coordinate substrate. 115-123 (RLGFGKGYY) is an ATP binding site. Residue Asp-124 participates in Mg(2+) binding. The ATP site is built by Arg-125 and Trp-153. Mg(2+) is bound at residue Asp-154.

It belongs to the 5-formyltetrahydrofolate cyclo-ligase family. As to quaternary structure, monomer or homodimer. Mg(2+) serves as cofactor. It depends on Mn(2+) as a cofactor. The cofactor is Ca(2+). Requires Zn(2+) as cofactor. Fe(2+) is required as a cofactor. Co(2+) serves as cofactor. It depends on Cu(2+) as a cofactor.

It is found in the cytoplasm. The catalysed reaction is (6S)-5-formyl-5,6,7,8-tetrahydrofolate + ATP = (6R)-5,10-methenyltetrahydrofolate + ADP + phosphate. In terms of biological role, involved in folate metabolism. Catalyzes the irreversible conversion of 5-formyltetrahydrofolate (5-FTHF) to yield 5,10-methenyltetrahydrofolate. The protein is 5-formyltetrahydrofolate cyclo-ligase of Mycoplasma pneumoniae (strain ATCC 29342 / M129 / Subtype 1) (Mycoplasmoides pneumoniae).